The following is a 105-amino-acid chain: Small ribosomal subunit protein bS6 (105 aa).

This sequence belongs to the bacterial ribosomal protein bS6 family.

Binds together with bS18 to 16S ribosomal RNA. The protein is Small ribosomal subunit protein bS6 of Lawsonia intracellularis (strain PHE/MN1-00).